The chain runs to 431 residues: Enolase (431 aa).

A (2R)-2-phosphoglycerate-binding site is contributed by glutamine 163. Glutamate 205 serves as the catalytic Proton donor. Aspartate 242, glutamate 288, and aspartate 315 together coordinate Mg(2+). (2R)-2-phosphoglycerate contacts are provided by lysine 340, arginine 369, serine 370, and lysine 391. Lysine 340 serves as the catalytic Proton acceptor.

Belongs to the enolase family. Mg(2+) serves as cofactor.

The protein resides in the cytoplasm. The protein localises to the secreted. It is found in the cell surface. It catalyses the reaction (2R)-2-phosphoglycerate = phosphoenolpyruvate + H2O. Its pathway is carbohydrate degradation; glycolysis; pyruvate from D-glyceraldehyde 3-phosphate: step 4/5. Its function is as follows. Catalyzes the reversible conversion of 2-phosphoglycerate (2-PG) into phosphoenolpyruvate (PEP). It is essential for the degradation of carbohydrates via glycolysis. This is Enolase from Bacillus cereus (strain ZK / E33L).